Consider the following 181-residue polypeptide: uncharacterized protein (181 aa).

The tract at residues 151–181 (AQKKKDFQEPENKHEQLTSTKAPCQENWSDF) is disordered. Residues 154-166 (KKDFQEPENKHEQ) show a composition bias toward basic and acidic residues. Polar residues predominate over residues 167–181 (LTSTKAPCQENWSDF).

This is an uncharacterized protein from Caenorhabditis elegans.